Here is a 265-residue protein sequence, read N- to C-terminus: ClpXP adapter protein SpxH (265 aa).

This sequence belongs to the SpxH family. In terms of assembly, interacts with Spx.

The protein resides in the cytoplasm. Its function is as follows. Adapter protein required for efficient degradation of Spx by ClpXP under non-stress conditions. Interaction with Spx stabilizes Spx and exposes the C-terminus of Spx for recognition and proteolysis by ClpXP. This is ClpXP adapter protein SpxH from Staphylococcus epidermidis (strain ATCC 35984 / DSM 28319 / BCRC 17069 / CCUG 31568 / BM 3577 / RP62A).